Reading from the N-terminus, the 196-residue chain is Imidazoleglycerol-phosphate dehydratase (196 aa).

It belongs to the imidazoleglycerol-phosphate dehydratase family.

Its subcellular location is the cytoplasm. It catalyses the reaction D-erythro-1-(imidazol-4-yl)glycerol 3-phosphate = 3-(imidazol-4-yl)-2-oxopropyl phosphate + H2O. It participates in amino-acid biosynthesis; L-histidine biosynthesis; L-histidine from 5-phospho-alpha-D-ribose 1-diphosphate: step 6/9. The chain is Imidazoleglycerol-phosphate dehydratase from Clostridium botulinum (strain Okra / Type B1).